The sequence spans 85 residues: Large ribosomal subunit protein bL27 (85 aa).

The interval 1 to 20 is disordered; sequence MAHKKAGGSTRNGRDSEAKR.

The protein belongs to the bacterial ribosomal protein bL27 family.

This is Large ribosomal subunit protein bL27 from Proteus mirabilis (strain HI4320).